Here is an 88-residue protein sequence, read N- to C-terminus: MANTKSARKSLIKSKQQRKCNASRRSMLRTFIKKVYTAIETKDKTAAMTAFVFMQKKIDHQACKGLIHKNKAARCKSRTFARIRSMGF.

Residues 1-20 (MANTKSARKSLIKSKQQRKC) form a disordered region.

It belongs to the bacterial ribosomal protein bS20 family.

Its function is as follows. Binds directly to 16S ribosomal RNA. The chain is Small ribosomal subunit protein bS20 from Blochmanniella pennsylvanica (strain BPEN).